A 278-amino-acid chain; its full sequence is Energy-coupling factor transporter ATP-binding protein EcfA1 (278 aa).

One can recognise an ABC transporter domain in the interval 5–239 (LLLESVSYQY…QDKLEAAGID (235 aa)). Residue 39-46 (GPNGSGKS) coordinates ATP.

This sequence belongs to the ABC transporter superfamily. Energy-coupling factor EcfA family. As to quaternary structure, forms a stable energy-coupling factor (ECF) transporter complex composed of 2 membrane-embedded substrate-binding proteins (S component), 2 ATP-binding proteins (A component) and 2 transmembrane proteins (T component).

It localises to the cell membrane. Functionally, ATP-binding (A) component of a common energy-coupling factor (ECF) ABC-transporter complex. Unlike classic ABC transporters this ECF transporter provides the energy necessary to transport a number of different substrates. In Halalkalibacterium halodurans (strain ATCC BAA-125 / DSM 18197 / FERM 7344 / JCM 9153 / C-125) (Bacillus halodurans), this protein is Energy-coupling factor transporter ATP-binding protein EcfA1.